A 393-amino-acid polypeptide reads, in one-letter code: NAD(P)H-quinone oxidoreductase subunit H, chloroplastic (393 aa).

Belongs to the complex I 49 kDa subunit family. As to quaternary structure, NDH is composed of at least 16 different subunits, 5 of which are encoded in the nucleus.

The protein localises to the plastid. Its subcellular location is the chloroplast thylakoid membrane. The enzyme catalyses a plastoquinone + NADH + (n+1) H(+)(in) = a plastoquinol + NAD(+) + n H(+)(out). The catalysed reaction is a plastoquinone + NADPH + (n+1) H(+)(in) = a plastoquinol + NADP(+) + n H(+)(out). Its function is as follows. NDH shuttles electrons from NAD(P)H:plastoquinone, via FMN and iron-sulfur (Fe-S) centers, to quinones in the photosynthetic chain and possibly in a chloroplast respiratory chain. The immediate electron acceptor for the enzyme in this species is believed to be plastoquinone. Couples the redox reaction to proton translocation, and thus conserves the redox energy in a proton gradient. This chain is NAD(P)H-quinone oxidoreductase subunit H, chloroplastic, found in Lotus japonicus (Lotus corniculatus var. japonicus).